The chain runs to 76 residues: KANTR integral membrane protein (76 aa).

A signal peptide spans 1–25 (MSPFSLLILVICAFSLFFLINLTRG). Topologically, residues 26-34 (LSILLVFSK) are extracellular. A helical membrane pass occupies residues 35-55 (NQLLALLLLSIVSLFSISLIS). The Cytoplasmic portion of the chain corresponds to 56–76 (ALIFFDLLPSTFFGFILLFFF).

It localises to the membrane. This chain is KANTR integral membrane protein, found in Homo sapiens (Human).